Consider the following 748-residue polypeptide: Sulfhydryl oxidase 1 (748 aa).

A signal peptide spans 1 to 32; that stretch reads MRRCGRLSGPPSLLLLLLLLSPLLFSGPGAYA. Positions 33-159 constitute a Thioredoxin domain; sequence ARLSVLYSSS…RMRLIDALES (127 aa). Active-site nucleophile residues include cysteine 73 and cysteine 76. 2 cysteine pairs are disulfide-bonded: cysteine 73/cysteine 76 and cysteine 104/cysteine 113. Residues asparagine 133 and asparagine 246 are each glycosylated (N-linked (GlcNAc...) asparagine). Residues cysteine 396 and cysteine 408 are joined by a disulfide bond. In terms of domain architecture, ERV/ALR sulfhydryl oxidase spans 399 to 506; that stretch reads SEPHFRGFPC…EDPHFPKVQW (108 aa). FAD is bound by residues arginine 404, tryptophan 411, histidine 415, aspartate 454, histidine 458, 481–488, lysine 503, and tryptophan 506; that span reads WTSHNRVN. Cysteines 452 and 455 form a disulfide. Cysteine 512 and cysteine 515 are oxidised to a cystine. The interval 581-647 is disordered; that stretch reads GHEQAASAES…QENAPGQQHL (67 aa). Residues 628-638 show a composition bias toward basic and acidic residues; it reads ERMEDHQRDMQ. Residues 711–731 traverse the membrane as a helical segment; that stretch reads ISLCVGLYSVSFMGLLAMYTY.

The protein belongs to the quiescin-sulfhydryl oxidase (QSOX) family. As to quaternary structure, monomer. Requires FAD as cofactor. N-glycosylated. O-glycosylated on Thr and Ser residues. In terms of tissue distribution, detected in skin (at protein level). Expressed in the seminal vesicles and skin.

It localises to the golgi apparatus membrane. The protein localises to the secreted. The catalysed reaction is 2 R'C(R)SH + O2 = R'C(R)S-S(R)CR' + H2O2. Its function is as follows. Catalyzes the oxidation of sulfhydryl groups in peptide and protein thiols to disulfides with the reduction of oxygen to hydrogen peroxide. Plays a role in disulfide bond formation in a variety of extracellular proteins. In fibroblasts, required for normal incorporation of laminin into the extracellular matrix, and thereby for normal cell-cell adhesion and cell migration. The protein is Sulfhydryl oxidase 1 (Qsox1) of Mus musculus (Mouse).